Reading from the N-terminus, the 313-residue chain is Protoheme IX farnesyltransferase (313 aa).

The next 8 helical transmembrane spans lie at 34–54 (VIEL…RGTV), 56–76 (PLLI…ANTL), 105–125 (HALI…WWTT), 128–148 (LSAH…TLVL), 152–172 (TSQN…IGWS), 173–193 (AVTG…FFWT), 243–263 (LALA…TWFL), and 291–311 (YLAV…PTLF).

Belongs to the UbiA prenyltransferase family. Protoheme IX farnesyltransferase subfamily.

Its subcellular location is the cell membrane. It catalyses the reaction heme b + (2E,6E)-farnesyl diphosphate + H2O = Fe(II)-heme o + diphosphate. Its pathway is porphyrin-containing compound metabolism; heme O biosynthesis; heme O from protoheme: step 1/1. In terms of biological role, converts heme B (protoheme IX) to heme O by substitution of the vinyl group on carbon 2 of heme B porphyrin ring with a hydroxyethyl farnesyl side group. The sequence is that of Protoheme IX farnesyltransferase from Mycolicibacterium vanbaalenii (strain DSM 7251 / JCM 13017 / BCRC 16820 / KCTC 9966 / NRRL B-24157 / PYR-1) (Mycobacterium vanbaalenii).